Reading from the N-terminus, the 125-residue chain is Egg cell-secreted protein 1.2 (125 aa).

The signal sequence occupies residues 1 to 22 (MASNTSFLFATIAILLVLNISG).

This sequence belongs to the plant egg cell-secreted peptide family. In terms of tissue distribution, restricted to female reproductive tissues, specifically accumulating in storage vesicles of the unfertilized egg cell.

It is found in the cytoplasmic vesicle. The protein resides in the secreted. In terms of biological role, involved in the regulation of gamete interactions during the double fertilization and to prevent multiple-pollen tube attraction; mediates the redistribution of the gamete fusogen HAP2/GCS1 to the cell surface after secretion upon sperm arrival. The protein is Egg cell-secreted protein 1.2 (EC1.2) of Arabidopsis thaliana (Mouse-ear cress).